We begin with the raw amino-acid sequence, 647 residues long: A-type voltage-gated potassium channel KCND1 (647 aa).

At 1–183 the chain is on the cytoplasmic side; the sequence is MAAGLATWLP…RAFENPHTST (183 aa). An interaction with KCNIP1, KCNIP2, and other family members region spans residues 2 to 20; sequence AAGLATWLPFARAAAVGWL. 3 residues coordinate Zn(2+): His104, Cys131, and Cys132. The segment at 144–163 is disordered; that stretch reads AERLAEDEEAEQAGDGPALP. The chain crosses the membrane as a helical span at residues 184–205; it reads AALVFYYVTGFFIAVSVIANVV. Residues 206 to 230 are Extracellular-facing; the sequence is ETIPCRGSARRSSREQPCGERFPQA. A helical transmembrane segment spans residues 231-252; sequence FFCMDTACVLIFTGEYLLRLFA. At 253–263 the chain is on the cytoplasmic side; the sequence is APSRCRFLRSV. Residues 264–284 traverse the membrane as a helical segment; the sequence is MSLIDVVAILPYYIGLLVPKN. Residues 285-287 lie on the Extracellular side of the membrane; that stretch reads DDV. The helical; Voltage-sensor transmembrane segment at 288 to 308 threads the bilayer; the sequence is SGAFVTLRVFRVFRIFKFSRH. Topologically, residues 309–323 are cytoplasmic; sequence SQGLRILGYTLKSCA. An S4-S5 linker region spans residues 310–323; that stretch reads QGLRILGYTLKSCA. Residues 324-345 traverse the membrane as a helical segment; it reads SELGFLLFSLTMAIIIFATVMF. Over 346-359 the chain is Extracellular; sequence YAEKGTNKTNFTSI. 2 N-linked (GlcNAc...) asparagine glycosylation sites follow: Asn352 and Asn355. The helical intramembrane region spans 360-371; the sequence is PAAFWYTIVTMT. The Selectivity filter motif lies at 372 to 377; the sequence is TLGYGD. An intramembrane segment occupies 372-379; it reads TLGYGDMV. Over 380–386 the chain is Extracellular; it reads PSTIAGK. Residues 387–415 form a helical membrane-spanning segment; that stretch reads IFGSICSLSGVLVIALPVPVIVSNFSRIY. Residues 416–647 are Cytoplasmic-facing; the sequence is HQNQRADKRR…FPETVKISSL (232 aa). Phosphoserine is present on Ser458. Residues 474–489 form a required for dendritic targeting region; that stretch reads FEQQHHHLLHCLEKTT. The span at 506–524 shows a compositional bias: low complexity; it reads VSPGGRTSRSTSVSSQPVG. The tract at residues 506 to 531 is disordered; the sequence is VSPGGRTSRSTSVSSQPVGPGSLLSS. The residue at position 555 (Ser555) is a Phosphoserine. Residues 601–634 form a disordered region; the sequence is IPTPPANTPDESQPSSPGGGGRAGSTLRNSSLGT.

Belongs to the potassium channel family. D (Shal) (TC 1.A.1.2) subfamily. Kv4.1/KCND1 sub-subfamily. As to quaternary structure, component of heteromultimeric potassium channels. Identified in potassium channel complexes containing KCND1, KCND2, KCND3, KCNIP1, KCNIP2, KCNIP3, KCNIP4, DPP6 and DPP10. Widely expressed. Highly expressed in brain, in particular in cerebellum and thalamus; detected at lower levels in the other parts of the brain.

It localises to the cell membrane. It catalyses the reaction K(+)(in) = K(+)(out). In terms of biological role, A-type voltage-gated potassium channel that mediates transmembrane potassium transport in excitable membranes in the brain. Mediates A-type current I(SA) in suprachiasmatic nucleus (SCN) neurons. Exhibits a low-threshold A-type current with a hyperpolarized steady-state inactivation midpoint and the recovery process was steeply voltage-dependent, with recovery being markedly faster at more negative potentials. May regulates repetitive firing rates in the suprachiasmatic nucleus (SCN) neurons and circadian rhythms in neuronal excitability and behavior. Contributes to the regulation of the circadian rhythm of action potential firing in suprachiasmatic nucleus neurons, which regulates the circadian rhythm of locomotor activity. The regulatory subunit KCNIP1 modulates the kinetics of channel inactivation, increases the current amplitudes and accelerates recovery from inactivation, shifts activation in a depolarizing direction. The regulatory subunit DPP10 decreases the voltage sensitivity of the inactivation channel gating. In Homo sapiens (Human), this protein is A-type voltage-gated potassium channel KCND1.